A 438-amino-acid polypeptide reads, in one-letter code: V-type ATP synthase beta chain (438 aa).

This sequence belongs to the ATPase alpha/beta chains family.

Produces ATP from ADP in the presence of a proton gradient across the membrane. The V-type beta chain is a regulatory subunit. The sequence is that of V-type ATP synthase beta chain (atpB) from Chlamydia muridarum (strain MoPn / Nigg).